We begin with the raw amino-acid sequence, 202 residues long: Orotate phosphoribosyltransferase (202 aa).

5-phospho-alpha-D-ribose 1-diphosphate is bound by residues K93 and 113-121; that span reads EDIITTGGS. 2 residues coordinate orotate: T117 and R145.

This sequence belongs to the purine/pyrimidine phosphoribosyltransferase family. PyrE subfamily. Homodimer. Requires Mg(2+) as cofactor.

It catalyses the reaction orotidine 5'-phosphate + diphosphate = orotate + 5-phospho-alpha-D-ribose 1-diphosphate. The protein operates within pyrimidine metabolism; UMP biosynthesis via de novo pathway; UMP from orotate: step 1/2. In terms of biological role, catalyzes the transfer of a ribosyl phosphate group from 5-phosphoribose 1-diphosphate to orotate, leading to the formation of orotidine monophosphate (OMP). The sequence is that of Orotate phosphoribosyltransferase from Campylobacter hominis (strain ATCC BAA-381 / DSM 21671 / CCUG 45161 / LMG 19568 / NCTC 13146 / CH001A).